Here is an 853-residue protein sequence, read N- to C-terminus: MESLSLTWITAIAVVLYLVQRYVRSYWRLKDIPGPVLAKLTDLQRVWWVKTGRAHEFHRDMHAMYGPIVRFGPNMVSVSDPRVIPTIYPSRPGFPKGDFYRTQKPYTRNKGAMPAVFNTQDEDLHKQLRSPIASLYSMTNVVRLEPLVDETLTVLSKQLDERFVGTNDKPFDLGDWLQYFAFDSMGTLTFSRRYGFLEQGRDMHGILQEIWNFMTRVAVMGQIPWFDEIWNKNSFITLFKRPTGFGVLKVVDNFISQRVSSRENDEKADEKDMLSQFLNIQASNPHSIMPWAPRAWTFSNVMAGSDSTANVMRTMMYNLLVDRDTLKSLRAELLEAESSNGLSRSLPSWDGVRSLPYLDACVLEALRLHPPFCLPFERVVPEGGITVCETYLPAGTVVGISPYLANRDKQTFGDDADKWRPSRWLDLSREDRVKLENSILTFGAGRRTCLGKNIAILEIKKLFPMLLLNYEIEIVNPENYQTTNAWFFRQWGLHAVIRKLPAPERDDTIEQKASIPPALNIPPSSSTVDVRIIDSGTLLDLRPDLFWTPDLPGLLKVTAPTYCFLISNGSRHVLFDLAVRQDWENLPPSIVAMIKSQTVIQEPRNISDVLDSDESSLGIRSKDIEAIIWSHAHFDHIGDPSTFPPSTELVVGPGIRDTHWPGFPTNPDAINLNTDIQGRNVREISFEKTQKGATKIGSFDAMDYFGDGSFYLLDAAGHSVGHIGALARVTTSPDSFVFMGGDSCHHAGVLRPTKYLPCPLDSGDTSLPCKSDSVFTLSPALPTDYTAALRTVENIKELDACEDVFVVLAHDATLKGKVDFYPSKINDWKAKEYGKKTKWLFYKDIENAIEGQK.

Over 1–6 the chain is Lumenal; the sequence is MESLSL. The helical transmembrane segment at 7 to 29 threads the bilayer; that stretch reads TWITAIAVVLYLVQRYVRSYWRL. Topologically, residues 30–853 are cytoplasmic; the sequence is KDIPGPVLAK…DIENAIEGQK (824 aa). Cys449 contributes to the heme binding site.

This sequence belongs to the cytochrome P450 family. Heme serves as cofactor.

The protein localises to the endoplasmic reticulum membrane. The enzyme catalyses 5-methylorsellinate + reduced [NADPH--hemoprotein reductase] + O2 = 4,6-dihydroxy-2-(hydroxymethyl)-3-methylbenzoate + oxidized [NADPH--hemoprotein reductase] + H2O + H(+). It catalyses the reaction 4,6-dihydroxy-2-(hydroxymethyl)-3-methylbenzoate + H(+) = 5,7-dihydroxy-4-methylphthalide + H2O. Its pathway is secondary metabolite biosynthesis; terpenoid biosynthesis. Cytochrome P450 monooxygenase; part of the gene cluster that mediates the biosynthesis of mycophenolic acid (MPA), the first isolated antibiotic natural product in the world obtained from a culture of Penicillium brevicompactum in 1893. MpaDE' is an endoplasmic reticulum-bound enzyme that catalyzes the conversion of 5-methylorsellinic acid (5MOA) into the phthalide compound 5,7-dihydroxy-4,6-dimethylphthalide (DHMP). MpaDE' first catalyzes hydroxylation of 5-MOA to 4,6-dihydroxy-2-(hydroxymethyl)-3-methylbenzoic acid (DHMB), and then acts as a lactone synthase that catalyzes the ring closure to convert DHMB into DHMP. The first step of the pathway is the synthesis of 5-methylorsellinic acid (5MOA) by the cytosolic polyketide synthase mpaC. 5MOA is then converted to the phthalide compound 5,7-dihydroxy-4,6-dimethylphthalide (DHMP) by the endoplasmic reticulum-bound cytochrome P450 monooxygenase mpaDE. MpaDE first catalyzes hydroxylation of 5-MOA to 4,6-dihydroxy-2-(hydroxymethyl)-3-methylbenzoic acid (DHMB). MpaDE then acts as a lactone synthase that catalyzes the ring closure to convert DHMB into DHMP. The next step is the prenylation of DHMP by the Golgi apparatus-associated prenyltransferase mpaA to yield farnesyl-DHMP (FDHMP). The ER-bound oxygenase mpaB then mediates the oxidative cleavage the C19-C20 double bond in FDHMP to yield FDHMP-3C via a mycophenolic aldehyde intermediate. The O-methyltransferase mpaG catalyzes the methylation of FDHMP-3C to yield MFDHMP-3C. After the cytosolic methylation of FDHMP-3C, MFDHMP-3C enters into peroxisomes probably via free diffusion due to its low molecular weight. Upon a peroxisomal CoA ligation reaction, catalyzed by a beta-oxidation component enzyme acyl-CoA ligase ACL891, MFDHMP-3C-CoA would then be restricted to peroxisomes for the following beta-oxidation pathway steps. The peroxisomal beta-oxidation machinery than converts MFDHMP-3C-CoA into MPA_CoA, via a beta-oxidation chain-shortening process. Finally mpaH acts as a peroxisomal acyl-CoA hydrolase with high substrate specificity toward MPA-CoA to release the final product MPA. The chain is Cytochrome P450 monooxygenase mpaDE' from Penicillium brevicompactum.